The following is a 197-amino-acid chain: dITP/XTP pyrophosphatase (197 aa).

8–13 (TKNKGK) contributes to the substrate binding site. Mg(2+) contacts are provided by glutamate 42 and aspartate 71. The active-site Proton acceptor is the aspartate 71. Residues serine 72, 154–157 (FGYD), lysine 177, and 182–183 (HR) contribute to the substrate site.

This sequence belongs to the HAM1 NTPase family. In terms of assembly, homodimer. Mg(2+) is required as a cofactor.

It carries out the reaction XTP + H2O = XMP + diphosphate + H(+). It catalyses the reaction dITP + H2O = dIMP + diphosphate + H(+). The enzyme catalyses ITP + H2O = IMP + diphosphate + H(+). Pyrophosphatase that catalyzes the hydrolysis of nucleoside triphosphates to their monophosphate derivatives, with a high preference for the non-canonical purine nucleotides XTP (xanthosine triphosphate), dITP (deoxyinosine triphosphate) and ITP. Seems to function as a house-cleaning enzyme that removes non-canonical purine nucleotides from the nucleotide pool, thus preventing their incorporation into DNA/RNA and avoiding chromosomal lesions. The protein is dITP/XTP pyrophosphatase of Oceanobacillus iheyensis (strain DSM 14371 / CIP 107618 / JCM 11309 / KCTC 3954 / HTE831).